We begin with the raw amino-acid sequence, 563 residues long: Solute carrier family 22 member 1 (563 aa).

Topologically, residues 1–21 (MLTVDDVLEQVGEFGWFQKQT) are cytoplasmic. A helical transmembrane segment spans residues 22–42 (FLILCLLSAAFAPIYVGIVFL). Residues 43–144 (AFTPDHRCRS…LVCDDSWKVD (102 aa)) lie on the Extracellular side of the membrane. The N-linked (GlcNAc...) asparagine glycan is linked to asparagine 71. Residues 145–165 (LFQSCVNLGFFLGSLGVGYIA) form a helical membrane-spanning segment. Residues 166-171 (DRFGRK) are Cytoplasmic-facing. The chain crosses the membrane as a helical span at residues 172 to 192 (VCLLATTLTCASLGVLTAVAP). The Extracellular segment spans residues 193 to 196 (DYTS). The chain crosses the membrane as a helical span at residues 197–219 (LLIFRLLQGLVSKGSWTAGYTLI). Over 220-232 (TEFVGLGYRRTVA) the chain is Cytoplasmic. A helical transmembrane segment spans residues 233-253 (ILYQMAFTVGLVLLSGLAYIL). At 254–257 (PHWR) the chain is on the extracellular side. A helical transmembrane segment spans residues 258 to 278 (WLQLAVSLPIFLLLFRFWFVP). The short motif at 278–282 (PESPR) is the Proline-rich sequence element. At 279 to 342 (ESPRWLLSQK…FRTPNLRKYT (64 aa)) the chain is on the cytoplasmic side. Serine 328 is modified (phosphoserine). The helical transmembrane segment at 343–363 (FILMYLWFTSSVVYQGLIMHV) threads the bilayer. Residues 364 to 371 (GATGGNLY) are Extracellular-facing. Residues 372–392 (LDFLYSALVEFPAGFIILVTI) traverse the membrane as a helical segment. Over 393-398 (DRFGRR) the chain is Cytoplasmic. The chain crosses the membrane as a helical span at residues 399 to 418 (YPLATSNLAAGLACFLMIFI). At 419-423 (PHDLP) the chain is on the extracellular side. Residues 424 to 446 (WLNIMVACVGRMGITIVFQMVCL) form a helical membrane-spanning segment. Topologically, residues 447-459 (VNAELFPTFIRNL) are cytoplasmic. Residues 460 to 480 (GMMVCSSLCDLGGVLTPFLVF) traverse the membrane as a helical segment. At 481–487 (RLMEVWQ) the chain is on the extracellular side. The helical transmembrane segment at 488–508 (GSPLILFAALGLVAGGMTLLL) threads the bilayer. Topologically, residues 509–563 (PETKGVTLPETIEDAENLQRKAKPKENKIYLQVQTSELNTQAAERDASQGTAQQK) are cytoplasmic.

Belongs to the major facilitator (TC 2.A.1) superfamily. Organic cation transporter (TC 2.A.1.19) family. In terms of processing, phosphorylated.

It localises to the basolateral cell membrane. The protein localises to the apical cell membrane. Its subcellular location is the lateral cell membrane. The protein resides in the basal cell membrane. It is found in the cell membrane. The enzyme catalyses 1-methylnicotinamide(out) = 1-methylnicotinamide(in). It catalyses the reaction dopamine(out) = dopamine(in). It carries out the reaction serotonin(out) = serotonin(in). The catalysed reaction is (R)-adrenaline(out) = (R)-adrenaline(in). The enzyme catalyses (R)-noradrenaline(out) = (R)-noradrenaline(in). It catalyses the reaction histamine(out) = histamine(in). It carries out the reaction guanidine(out) = guanidine(in). The catalysed reaction is choline(out) = choline(in). The enzyme catalyses acetylcholine(in) = acetylcholine(out). It catalyses the reaction thiamine(in) = thiamine(out). It carries out the reaction spermidine(in) = spermidine(out). The catalysed reaction is agmatine(out) = agmatine(in). The enzyme catalyses putrescine(out) = putrescine(in). It catalyses the reaction (R)-carnitine(in) = (R)-carnitine(out). It carries out the reaction O-isobutanoyl-(R)-carnitine(in) = O-isobutanoyl-(R)-carnitine(out). The catalysed reaction is O-acetyl-(R)-carnitine(in) = O-acetyl-(R)-carnitine(out). The enzyme catalyses O-3-hydroxybutanoyl-(R)-carnitine(in) = O-3-hydroxybutanoyl-(R)-carnitine(out). It catalyses the reaction O-propanoyl-(R)-carnitine(in) = O-propanoyl-(R)-carnitine(out). It carries out the reaction O-butanoyl-(R)-carnitine(in) = O-butanoyl-(R)-carnitine(out). The catalysed reaction is O-2-methylbutanoyl-(R)-carnitine(in) = O-2-methylbutanoyl-(R)-carnitine(out). The enzyme catalyses O-3-methylbutanoyl-(R)-carnitine(in) = O-3-methylbutanoyl-(R)-carnitine(out). It catalyses the reaction O-hexanoyl-(R)-carnitine(in) = O-hexanoyl-(R)-carnitine(out). It carries out the reaction L-histidyl-L-proline diketopiperazine(in) = L-histidyl-L-proline diketopiperazine(out). The catalysed reaction is (R)-salsolinol(in) = (R)-salsolinol(out). The enzyme catalyses prostaglandin F2alpha(out) = prostaglandin F2alpha(in). It catalyses the reaction prostaglandin E2(out) = prostaglandin E2(in). With respect to regulation, phosphorylation of the transporter leads to changes in its substrate affinity, resulting in a regulation of the transport activity. In contrast with rat ortholog, ASP uptake is inhibited by protein kinase A (PKA) and C (PKC) activation. ASP uptake is also endogenously activated by calmodulin, the calmodulin-dependent kinase II and LCK tyrosine kinase. Inhibited by cGMP, most likely through a cGMP-binding protein that interacts with OCT1. In terms of biological role, electrogenic voltage-dependent transporter that mediates the transport of a variety of organic cations such as endogenous bioactive amines, cationic drugs and xenobiotics. Functions as a pH- and Na(+)-independent, bidirectional transporter. Cation cellular uptake or release is driven by the electrochemical potential (i.e. membrane potential and concentration gradient) and substrate selectivity. Hydrophobicity is a major requirement for recognition in polyvalent substrates and inhibitors. Primarily expressed in the basolateral membrane of hepatocytes and proximal tubules and involved in the uptake and disposition of cationic compounds from the blood by hepatic and renal clearance. Most likely functions as an uptake carrier in enterocytes contributing to the intestinal elimination of organic cations from the systemic circulation. Transports endogenous monoamines such as N-1-methylnicotinamide (NMN), guanidine, neurotransmitters dopamine, serotonin, noradrenaline, adrenaline and histamine, and quaternary ammonium compound such as choline. Also transports natural polyamines such as spermidine, agmatine and putrescine at low affinity, but relatively high turnover. Involved in the hepatic and intestinal uptake of the vitamin B1/thiamine, hence regulating hepatic lipid and energy metabolism. Contributes to the influx and efflux of fatty acid carriers carnitines and acylcarnitines across the basolateral membrane of hepatocytes, from the liver to the systemic circulation and inversely and may be involved in regulating the systemic availability of hepatic acylcarnitines. Also capable of transporting non-amine endogenous compounds such as prostaglandin E2 (PGE2) and prostaglandin F2-alpha (PGF2-alpha). May contribute to the transport of cationic compounds in testes across the blood-testis-barrier. Also mediates the uptake of xenobiotics tributylmethylammonium (TBuMA), quinidine, N-methyl-quinine (NMQ), N-methyl-quinidine (NMQD) N-(4,4-azo-n-pentyl)-quinuclidine (APQ), azidoprocainamide methoiodide (AMP), N-(4,4-azo-n-pentyl)-21-deoxyajmalinium (APDA) and 4-(4-(dimethylamino)styryl)-N-methylpyridinium (ASP). The chain is Solute carrier family 22 member 1 (SLC22A1) from Bos taurus (Bovine).